The primary structure comprises 1960 residues: [F-actin]-monooxygenase MICAL3 (1960 aa).

The monooxygenase domain stretch occupies residues 2–494; that stretch reads EESKNEATNR…RHLYDTGDTK (493 aa). FAD is bound by residues C97, 116–118, 123–125, F183, Y298, and D398; these read EKR and RNN. The Calponin-homology (CH) domain maps to 518-624; it reads VARSSKLLGW…YLTQFYEMFK (107 aa). The residue at position 649 (S649) is a Phosphoserine. The interval 658–704 is disordered; the sequence is GQTISRKRSPKDKKEKDLDGAGKRRKTSQSEEEDTPRGHRGARPTLV. Residues 669–679 are compositionally biased toward basic and acidic residues; it reads DKKEKDLDGAG. Phosphoserine is present on residues S685 and S687. Residues 762 to 824 enclose the LIM zinc-binding domain; sequence DTCYFCQKRV…KPHYCYRLSG (63 aa). Zn(2+) contacts are provided by C764, C767, H785, C788, C791, C794, C814, and H817. 2 disordered regions span residues 826–887 and 906–1295; these read AQRK…LRGT and LEEV…EALK. A Phosphothreonine modification is found at T887. S971 is subject to Phosphoserine. Residues 984 to 1014 show a composition bias toward acidic residues; it reads GEEEEEDEEDEEEEEEEEDEEDEEEDEDESS. Composition is skewed to basic and acidic residues over residues 1039–1051 and 1072–1084; these read HWTHIRESQEERA and DVDSEPAEIKGEA. Phosphoserine is present on residues S1129, S1139, S1156, and S1188. Pro residues-rich tracts occupy residues 1192–1203 and 1217–1233; these read SPLPEPSTPPAE and RTPPSPASPQRPSPPTQ. S1250 carries the phosphoserine modification. A Phosphothreonine modification is found at T1252. A phosphoserine mark is found at S1254, S1286, and S1313. Residues 1277-1286 show a composition bias toward polar residues; that stretch reads QGVTKDTLGS. Disordered regions lie at residues 1316-1550 and 1564-1782; these read LTPV…KRGL and RMRA…EEEL. A Phosphothreonine modification is found at T1317. Positions 1379 to 1393 are enriched in basic and acidic residues; it reads PDREPKGPREEHRDL. Residues 1394-1406 show a composition bias toward low complexity; that stretch reads SSSSGLGLQGSSS. The residue at position 1404 (S1404) is a Phosphoserine. Polar residues predominate over residues 1407–1425; it reads RTRTPGSQSFNTSDSTMLT. T1425 bears the Phosphothreonine mark. Residues 1485–1503 are compositionally biased toward acidic residues; it reads SVDEIPFADDVEDTYDDNT. The segment covering 1594–1611 has biased composition (low complexity); sequence AAAAPRTPRTPAPRRATA. The span at 1616–1627 shows a compositional bias: basic and acidic residues; sequence GPEEPAPRHEAT. The span at 1633-1653 shows a compositional bias: low complexity; it reads SPPSDSGGPDGSVTSSEGSSG. Over residues 1654–1672 the composition is skewed to basic residues; it reads KSKKRSSLFSPRRSKKEKK. Residues S1660 and S1663 each carry the phosphoserine modification. A compositionally biased stretch (polar residues) spans 1718–1727; sequence CPSTPSSGTT. The span at 1762 to 1778 shows a compositional bias: basic and acidic residues; it reads VLERTSQKSRKEPRTYT. Residues 1779–1952 are a coiled coil; the sequence is EEELNAKLTR…DKDLEAAMLS (174 aa). Residues 1799–1948 enclose the bMERB domain; the sequence is KQEELKRLHR…EKEEDKDLEA (150 aa). S1870 bears the Phosphoserine mark.

It belongs to the Mical family. Interacts with RAB1B, RAB8A, RAB10, RAB13 and RAB15 (in their GTP-bound forms); binding to RAB1B is of low affinity compared to other Rab proteins; at least in case of RAB8A can bind 2 molecules of RAB8A simultaneously through a high and a low affinity binding site, respectively. Interacts with ERC1 and RAB8A; may bridge ERC1 with RAB8A. Interacts with KIF23 and ERC1; enhances the interaction between KIF23 and ERC1. Interacts with NINL. FAD is required as a cofactor.

Its subcellular location is the cytoplasm. The protein resides in the cell cortex. The protein localises to the cytoskeleton. It is found in the nucleus. It localises to the midbody. Its subcellular location is the spindle. The protein resides in the cilium basal body. It catalyses the reaction L-methionyl-[F-actin] + NADPH + O2 + H(+) = L-methionyl-(R)-S-oxide-[F-actin] + NADP(+) + H2O. In terms of biological role, monooxygenase that promotes depolymerization of F-actin by mediating oxidation of specific methionine residues on actin to form methionine-sulfoxide, resulting in actin filament disassembly and preventing repolymerization. In the absence of actin, it also functions as a NADPH oxidase producing H(2)O(2). Seems to act as Rab effector protein and play a role in vesicle trafficking. Involved in exocytic vesicles tethering and fusion: the monooxygenase activity is required for this process and implicates RAB8A associated with exocytotic vesicles. Required for cytokinesis. Contributes to stabilization and/or maturation of the intercellular bridge independently of its monooxygenase activity. Promotes recruitment of Rab8 and ERC1 to the intercellular bridge, and together these proteins are proposed to function in timely abscission. This chain is [F-actin]-monooxygenase MICAL3 (MICAL3), found in Bos taurus (Bovine).